A 500-amino-acid chain; its full sequence is L-arabinose isomerase (500 aa).

Positions 306, 333, 350, and 450 each coordinate Mn(2+).

This sequence belongs to the arabinose isomerase family. As to quaternary structure, homohexamer. Mn(2+) serves as cofactor.

The catalysed reaction is beta-L-arabinopyranose = L-ribulose. The protein operates within carbohydrate degradation; L-arabinose degradation via L-ribulose; D-xylulose 5-phosphate from L-arabinose (bacterial route): step 1/3. Catalyzes the conversion of L-arabinose to L-ribulose. The sequence is that of L-arabinose isomerase from Shigella boydii serotype 18 (strain CDC 3083-94 / BS512).